A 411-amino-acid chain; its full sequence is Multidrug resistance protein MdtA (411 aa).

An N-terminal signal peptide occupies residues 1–19 (MNAKRIRGLLILAAVIAIA). Polar residues predominate over residues 31–49 (PAAPGTSEQHAARTSHSEN). Residues 31–58 (PAAPGTSEQHAARTSHSENSGSGGGRRA) form a disordered region.

This sequence belongs to the membrane fusion protein (MFP) (TC 8.A.1) family. As to quaternary structure, part of a tripartite efflux system composed of MdtA, MdtB and MdtC.

It localises to the cell inner membrane. The sequence is that of Multidrug resistance protein MdtA from Pectobacterium atrosepticum (strain SCRI 1043 / ATCC BAA-672) (Erwinia carotovora subsp. atroseptica).